The chain runs to 158 residues: Cyclic pyranopterin monophosphate synthase (158 aa).

Substrate is bound by residues 76–78 (LCH) and 114–115 (ME). The active site involves Asp-129.

This sequence belongs to the MoaC family. In terms of assembly, homohexamer; trimer of dimers.

The catalysed reaction is (8S)-3',8-cyclo-7,8-dihydroguanosine 5'-triphosphate = cyclic pyranopterin phosphate + diphosphate. It participates in cofactor biosynthesis; molybdopterin biosynthesis. Catalyzes the conversion of (8S)-3',8-cyclo-7,8-dihydroguanosine 5'-triphosphate to cyclic pyranopterin monophosphate (cPMP). This is Cyclic pyranopterin monophosphate synthase from Shewanella baltica (strain OS155 / ATCC BAA-1091).